The following is a 262-amino-acid chain: Dihydroorotate dehydrogenase B (NAD(+)), electron transfer subunit (262 aa).

The FAD-binding FR-type domain maps to 2 to 102 (SKVFDAKVLA…MGPLGRGFTL (101 aa)). FAD-binding positions include 53–56 (RPIS), 70–72 (LFR), and 77–78 (GT). [2Fe-2S] cluster is bound by residues cysteine 224, cysteine 229, cysteine 232, and cysteine 248.

It belongs to the PyrK family. Heterotetramer of 2 PyrK and 2 PyrD type B subunits. However, the metal reductase complex seems to be composed of a heterooctamer of 4 PyrK and 4 PyrD subunits. FAD serves as cofactor. Requires [2Fe-2S] cluster as cofactor.

The protein resides in the cytoplasm. Its pathway is pyrimidine metabolism; UMP biosynthesis via de novo pathway; orotate from (S)-dihydroorotate (NAD(+) route): step 1/1. Functionally, responsible for channeling the electrons from the oxidation of dihydroorotate from the FMN redox center in the PyrD type B subunit to the ultimate electron acceptor NAD(+). Its function is as follows. Together with PyrD, also forms a metal reductase complex able to reduce Fe(III)-chelates to Fe(II)-chelates, as well as soluble Cr(VI) and U(VI), using NADH as electron donor. To a lesser extent, can also use NADPH as an electron donor. Is unable to reduce riboflavin and FMN with NADH as electron donor. May have an in vivo role in metal reduction in D.reducens, which is an organism capable of reducing contaminant heavy metals and radionuclides. This chain is Dihydroorotate dehydrogenase B (NAD(+)), electron transfer subunit, found in Desulforamulus reducens (strain ATCC BAA-1160 / DSM 100696 / MI-1) (Desulfotomaculum reducens).